The primary structure comprises 427 residues: MWLYYLQVVMDMRVYVEGYGCVLNTADTEIIKNSLKKHGFEVVNNLEEADIAIINTCVVRLETENRMIYRINELKNLGKEVVVAGCLPKALKNKVKGFLHIYPREAHKAGEILKNYVEKHYRMPYIEEDINKTLYKKLDYLKPSLITPLPICEGCIGNCSYCIVKIARGGLISYPREKIVNKAKELINKGAKCLLITAQDTACYGFDIGDNLANLLNELTQIKGEFIMRVGMMHAKNAELILDELIEVYQNEKVGKFLHLPLQSGDDEILKRMKRGYTVDEFKDIVNEFRRKIKNLCFTTDIIVGFPGETEEQFQNTLEVLRELKPDYIHGAKYSQRKGTEAAKMKQIDTKIRKRRSEILDKLRRELSYLNNKKYIGKAMKVLVLDEGKGYTDNFKVVKFEGGEVGEFRKVKITDAKTFGLKGELIL.

One can recognise an MTTase N-terminal domain in the interval 12-118 (MRVYVEGYGC…AGEILKNYVE (107 aa)). The [4Fe-4S] cluster site is built by Cys21, Cys57, Cys86, Cys155, Cys159, and Cys162. The region spanning 141–370 (LKPSLITPLP…DKLRRELSYL (230 aa)) is the Radical SAM core domain. A TRAM domain is found at 373–427 (KKYIGKAMKVLVLDEGKGYTDNFKVVKFEGGEVGEFRKVKITDAKTFGLKGELIL).

It belongs to the methylthiotransferase family. CDKAL1 subfamily. Requires [4Fe-4S] cluster as cofactor.

It catalyses the reaction N(6)-L-threonylcarbamoyladenosine(37) in tRNA + (sulfur carrier)-SH + AH2 + 2 S-adenosyl-L-methionine = 2-methylsulfanyl-N(6)-L-threonylcarbamoyladenosine(37) in tRNA + (sulfur carrier)-H + 5'-deoxyadenosine + L-methionine + A + S-adenosyl-L-homocysteine + 2 H(+). Its function is as follows. Catalyzes the methylthiolation of N6-threonylcarbamoyladenosine (t(6)A), leading to the formation of 2-methylthio-N6-threonylcarbamoyladenosine (ms(2)t(6)A) at position 37 in tRNAs that read codons beginning with adenine. This chain is Probable threonylcarbamoyladenosine tRNA methylthiotransferase, found in Methanocaldococcus jannaschii (strain ATCC 43067 / DSM 2661 / JAL-1 / JCM 10045 / NBRC 100440) (Methanococcus jannaschii).